Here is a 121-residue protein sequence, read N- to C-terminus: Large ribosomal subunit protein bL19 (121 aa).

This sequence belongs to the bacterial ribosomal protein bL19 family.

In terms of biological role, this protein is located at the 30S-50S ribosomal subunit interface and may play a role in the structure and function of the aminoacyl-tRNA binding site. The sequence is that of Large ribosomal subunit protein bL19 from Bifidobacterium adolescentis (strain ATCC 15703 / DSM 20083 / NCTC 11814 / E194a).